The following is a 30-amino-acid chain: Fimbrial assembly protein, serogroup B1 (30 aa).

This Dichelobacter nodosus (Bacteroides nodosus) protein is Fimbrial assembly protein, serogroup B1 (fimB).